The primary structure comprises 536 residues: Feruloyl esterase B (536 aa).

A signal peptide spans 1 to 20; the sequence is MKTSIVLSIVALFLTSKASA. The region spanning 21–59 is the CBM10 domain; that stretch reads DCWSERLGWPCCSDSNAEVIYVDDDGDWGVENNDWCGIQ. Residues 22-59 are cellulose-binding; sequence CWSERLGWPCCSDSNAEVIYVDDDGDWGVENNDWCGIQ. Asparagine 65 carries an N-linked (GlcNAc...) asparagine glycan. 12 consecutive repeat copies span residues 78–90, 91–103, 104–116, 117–129, 134–146, 151–163, 164–176, 181–193, 194–206, 211–223, 224–236, and 237–249. The interval 78–249 is 12 X 13 AA repeats of N-Q-G-G-G-M-[PQ]-W-G-D-F-G-G; that stretch reads NQGGGMPWGD…GGMQWGDFGG (172 aa). Residues 203-252 are compositionally biased toward gly residues; sequence DFGGNQGGNQGGGMPWGDFGGNQGGGMQWGDFGGNQGGGMQWGDFGGNQG. Positions 203–273 are disordered; it reads DFGGNQGGNQ…SGPTVEYSTD (71 aa). The catalytic stretch occupies residues 257–536; it reads WGNQGGNSGP…WDFVKQFSLP (280 aa).

Component of the multienzyme cellulase-hemicellulase complex.

It is found in the secreted. It catalyses the reaction feruloyl-polysaccharide + H2O = ferulate + polysaccharide.. Inhibited by the specific serine esterase inhibitor AEBSF. Functionally, involved in degradation of plant cell walls. Hydrolyzes of the feruloyl-arabinose ester bond in arabinoxylans as well as the feruloyl-galactose and feruloyl-arabinose ester bonds in pectin. This chain is Feruloyl esterase B (ESTA), found in Piromyces equi.